Consider the following 448-residue polypeptide: Acetate kinase (448 aa).

Asn-7 provides a ligand contact to Mg(2+). Lys-14 contacts ATP. Arg-91 is a binding site for substrate. Asp-148 acts as the Proton donor/acceptor in catalysis. Residues 208-212 (HIGNG) and 283-285 (DRR) each bind ATP. A Mg(2+)-binding site is contributed by Glu-388.

This sequence belongs to the acetokinase family. In terms of assembly, homodimer. It depends on Mg(2+) as a cofactor. Mn(2+) is required as a cofactor.

It is found in the cytoplasm. The catalysed reaction is acetate + ATP = acetyl phosphate + ADP. It participates in metabolic intermediate biosynthesis; acetyl-CoA biosynthesis; acetyl-CoA from acetate: step 1/2. Functionally, catalyzes the formation of acetyl phosphate from acetate and ATP. Can also catalyze the reverse reaction. This Treponema pallidum (strain Nichols) protein is Acetate kinase.